The chain runs to 414 residues: Transcription factor FAMA (414 aa).

Disordered stretches follow at residues Met1–Asp61 and Lys142–Met197. Low complexity-rich tracts occupy residues Gly12–Gly24 and Gln35–Gln49. Positions Arg166–Glu175 are enriched in basic and acidic residues. Residues Val176–Thr185 show a composition bias toward basic residues. The span at Lys187–Met197 shows a compositional bias: basic and acidic residues. The 52-residue stretch at Ser194–Leu245 folds into the bHLH domain. The LxCxE motif motif lies at Leu249 to Glu253.

Interacts with FAMA through its LxCxE motif. Self-interacts. Also interacts with bHLH071 and bHLH093. Interacts with RBR1. As to expression, resctricted to stomatal cell lineages (at protein level). Expressed in roots, leaves, stems, and flowers.

It is found in the nucleus. Transcription activator. Together with MYB88 and MYB124, ensures that stomata contain just two guard cells (GCs) by enforcing a single symmetric precursor cell division before stomatal maturity. Together with SPCH and MUTE, regulates the stomata formation. Required to promote differentiation and morphogenesis of stomatal guard cells and to halt proliferative divisions in their immediate precursors. Mediates the formation of stomata. Prevents histone H3K27me3 marks and derepresses stem cell gene expression. The polypeptide is Transcription factor FAMA (FAMA) (Arabidopsis thaliana (Mouse-ear cress)).